Here is an 874-residue protein sequence, read N- to C-terminus: Alanine--tRNA ligase (874 aa).

4 residues coordinate Zn(2+): His562, His566, Cys664, and His668.

This sequence belongs to the class-II aminoacyl-tRNA synthetase family. It depends on Zn(2+) as a cofactor.

Its subcellular location is the cytoplasm. The enzyme catalyses tRNA(Ala) + L-alanine + ATP = L-alanyl-tRNA(Ala) + AMP + diphosphate. Its function is as follows. Catalyzes the attachment of alanine to tRNA(Ala) in a two-step reaction: alanine is first activated by ATP to form Ala-AMP and then transferred to the acceptor end of tRNA(Ala). Also edits incorrectly charged Ser-tRNA(Ala) and Gly-tRNA(Ala) via its editing domain. The polypeptide is Alanine--tRNA ligase (Shewanella woodyi (strain ATCC 51908 / MS32)).